We begin with the raw amino-acid sequence, 466 residues long: Uridine kinase-like protein 3 (466 aa).

The tract at residues 41–246 (HGQPFVIGVA…IVQHIHTKLG (206 aa)) is uridine kinase. The tract at residues 256–466 (NLYVIQSTFQ…GDRYFGTDDE (211 aa)) is uracil phosphoribosyltransferase. GTP-binding positions include K280, R289, and 323 to 326 (CKKL). 2 residues coordinate 5-phospho-alpha-D-ribose 1-diphosphate: R333 and R358. Position 378 (R378) interacts with GTP. 5-phospho-alpha-D-ribose 1-diphosphate is bound by residues D384, 389–392 (TGNS), and E455. 454–456 (GEF) contributes to the uracil binding site.

It in the N-terminal section; belongs to the uridine kinase family. This sequence in the C-terminal section; belongs to the UPRTase family. It depends on Mg(2+) as a cofactor.

The catalysed reaction is UMP + diphosphate = 5-phospho-alpha-D-ribose 1-diphosphate + uracil. It carries out the reaction cytidine + ATP = CMP + ADP + H(+). It catalyses the reaction uridine + ATP = UMP + ADP + H(+). The protein operates within pyrimidine metabolism; UMP biosynthesis via salvage pathway; UMP from uracil: step 1/1. Its pathway is pyrimidine metabolism; CTP biosynthesis via salvage pathway; CTP from cytidine: step 1/3. It functions in the pathway pyrimidine metabolism; UMP biosynthesis via salvage pathway; UMP from uridine: step 1/1. With respect to regulation, allosterically activated by GTP. Its function is as follows. Involved in the pyrimidine salvage pathway. The uracil phosphoribosyltransferase (UPRT) activity, that catalyzes the conversion of uracil and 5-phospho-alpha-D-ribose 1-diphosphate (PRPP) to UMP and diphosphate, is unsure. The chain is Uridine kinase-like protein 3 (UKL3) from Arabidopsis thaliana (Mouse-ear cress).